Consider the following 50-residue polypeptide: Cytochrome c oxidase subunit 4 (50 aa).

At 2 to 17 (ASHHEITDHKHGEMDI) the chain is on the cytoplasmic side. A helical transmembrane segment spans residues 18–49 (RHQQATFAGFIKGATWVSILSIAVLVFLALAN). Position 50 (Ser50) is a topological domain, periplasmic.

Its subcellular location is the cell inner membrane. It catalyses the reaction 4 Fe(II)-[cytochrome c] + O2 + 8 H(+)(in) = 4 Fe(III)-[cytochrome c] + 2 H2O + 4 H(+)(out). Not required for enzymatic activity or proton pumping of the cytochrome c oxidase complex. In Paracoccus denitrificans, this protein is Cytochrome c oxidase subunit 4 (ctaH).